We begin with the raw amino-acid sequence, 78 residues long: Acyl carrier protein (78 aa).

Residues 2–77 (SSIEERVKKI…QATSYVEANL (76 aa)) form the Carrier domain. Ser-37 is subject to O-(pantetheine 4'-phosphoryl)serine.

It belongs to the acyl carrier protein (ACP) family. Post-translationally, 4'-phosphopantetheine is transferred from CoA to a specific serine of apo-ACP by AcpS. This modification is essential for activity because fatty acids are bound in thioester linkage to the sulfhydryl of the prosthetic group.

The protein resides in the cytoplasm. It functions in the pathway lipid metabolism; fatty acid biosynthesis. Its function is as follows. Carrier of the growing fatty acid chain in fatty acid biosynthesis. In Hydrogenovibrio crunogenus (strain DSM 25203 / XCL-2) (Thiomicrospira crunogena), this protein is Acyl carrier protein.